Here is a 409-residue protein sequence, read N- to C-terminus: Phosphatidylserine decarboxylase proenzyme, mitochondrial (409 aa).

The N-terminal 52 residues, 1–52 (MAASVCRPYVRSLPGVMPWRSSSCHYEYTAMHHFLGSFQKLPFEPFNTGARK), are a transit peptide targeting the mitochondrion. At 53-63 (IHTAPVRSLFL) the chain is on the mitochondrial matrix side. A helical membrane pass occupies residues 64–82 (LRPVPILLATGGGYAGYRQ). Residues 83–409 (YEKYRDQKLE…IRFGEALGSL (327 aa)) lie on the Mitochondrial intermembrane side of the membrane. Catalysis depends on charge relay system; for autoendoproteolytic cleavage activity residues Asp191, His267, and Ser378. The Schiff-base intermediate with substrate; via pyruvic acid; for decarboxylase activity role is filled by Ser378. The residue at position 378 (Ser378) is a Pyruvic acid (Ser); by autocatalysis.

It belongs to the phosphatidylserine decarboxylase family. PSD-B subfamily. Eukaryotic type I sub-subfamily. As to quaternary structure, heterodimer of a large membrane-associated beta subunit and a small pyruvoyl-containing alpha subunit. The cofactor is pyruvate. Is synthesized initially as an inactive proenzyme. Formation of the active enzyme involves a self-maturation process in which the active site pyruvoyl group is generated from an internal serine residue via an autocatalytic post-translational modification. Two non-identical subunits are generated from the proenzyme in this reaction, and the pyruvate is formed at the N-terminus of the alpha chain, which is derived from the carboxyl end of the proenzyme. The autoendoproteolytic cleavage occurs by a canonical serine protease mechanism, in which the side chain hydroxyl group of the serine supplies its oxygen atom to form the C-terminus of the beta chain, while the remainder of the serine residue undergoes an oxidative deamination to produce ammonia and the pyruvoyl prosthetic group on the alpha chain. During this reaction, the Ser that is part of the protease active site of the proenzyme becomes the pyruvoyl prosthetic group, which constitutes an essential element of the active site of the mature decarboxylase.

The protein localises to the mitochondrion inner membrane. It is found in the cytoplasm. Its subcellular location is the lipid droplet. The catalysed reaction is a 1,2-diacyl-sn-glycero-3-phospho-L-serine + H(+) = a 1,2-diacyl-sn-glycero-3-phosphoethanolamine + CO2. It functions in the pathway phospholipid metabolism; phosphatidylethanolamine biosynthesis. Catalyzes the formation of phosphatidylethanolamine (PtdEtn) from phosphatidylserine (PtdSer). Plays a central role in phospholipid metabolism and in the interorganelle trafficking of phosphatidylserine. May be involved in lipid droplet biogenesis at the endoplasmic reticulum membrane. In Cricetulus griseus (Chinese hamster), this protein is Phosphatidylserine decarboxylase proenzyme, mitochondrial.